Here is a 930-residue protein sequence, read N- to C-terminus: Isoleucine--tRNA ligase (930 aa).

A 'HIGH' region motif is present at residues 57 to 67 (PYANGHLHIGH). Glu573 contributes to the L-isoleucyl-5'-AMP binding site. The short motif at 614 to 618 (KMSKS) is the 'KMSKS' region element. Lys617 is an ATP binding site. Cys902, Cys905, Cys918, and Cys921 together coordinate Zn(2+).

Belongs to the class-I aminoacyl-tRNA synthetase family. IleS type 1 subfamily. In terms of assembly, monomer. Zn(2+) serves as cofactor.

It localises to the cytoplasm. It carries out the reaction tRNA(Ile) + L-isoleucine + ATP = L-isoleucyl-tRNA(Ile) + AMP + diphosphate. Catalyzes the attachment of isoleucine to tRNA(Ile). As IleRS can inadvertently accommodate and process structurally similar amino acids such as valine, to avoid such errors it has two additional distinct tRNA(Ile)-dependent editing activities. One activity is designated as 'pretransfer' editing and involves the hydrolysis of activated Val-AMP. The other activity is designated 'posttransfer' editing and involves deacylation of mischarged Val-tRNA(Ile). This Helicobacter hepaticus (strain ATCC 51449 / 3B1) protein is Isoleucine--tRNA ligase.